The primary structure comprises 607 residues: Vacuolar fusion protein MON1 homolog (607 aa).

Residues 1-14 (MATSDSRSSPSSSD) show a composition bias toward low complexity. 2 disordered regions span residues 1–173 (MATS…DDAS) and 463–486 (PIDRRRRSSTTNQEQDSPGPDISV). Residues 21-55 (NPSSDPETNSERVQSQLESMNLSQPSEVSDGSHTE) are compositionally biased toward polar residues.

Belongs to the MON1/SAND family. Interacts with CCZ1A, CCZ1B and RABF2B. Widely expressed at stable levels.

The protein resides in the endosome. Its subcellular location is the prevacuolar compartment. Plays an important role in membrane trafficking through the secretory apparatus. In complex with CCZ1, acts as a guanine exchange factor (GEF) for RABG3F of the Rab7 protein family. Promotes the exchange of GDP to GTP, converting RABG3F from an inactive GDP-bound form into an active GTP-bound form. The RABG3F active form is involved in protein trafficking from prevacuolar compartments (PVCs) to vacuoles. May serve as a linker between Rab5 and Rab7 protein families in PVCs and mediate PVC maturation. In Arabidopsis thaliana (Mouse-ear cress), this protein is Vacuolar fusion protein MON1 homolog.